A 189-amino-acid chain; its full sequence is Chitin synthase 1 (189 aa).

This sequence belongs to the chitin synthase family.

It localises to the cell membrane. It carries out the reaction [(1-&gt;4)-N-acetyl-beta-D-glucosaminyl](n) + UDP-N-acetyl-alpha-D-glucosamine = [(1-&gt;4)-N-acetyl-beta-D-glucosaminyl](n+1) + UDP + H(+). Polymerizes chitin, a structural polymer of the cell wall and septum, by transferring the sugar moiety of UDP-GlcNAc to the non-reducing end of the growing chitin polymer. The polypeptide is Chitin synthase 1 (CHS1) (Xylohypha bantiana).